Here is a 388-residue protein sequence, read N- to C-terminus: Diacylglycerol O-acyltransferase 2 (388 aa).

The Cytoplasmic portion of the chain corresponds to 1–69 (MKTLIAAYSG…NRSKVEKHLQ (69 aa)). Residues 70–88 (VISVLQWVLSFLVLGVACS) form a helical membrane-spanning segment. The Lumenal segment spans residues 89–92 (VILM). The helical transmembrane segment at 93–112 (YTFCTDCWLIAALYFTWLAF) threads the bilayer. The Cytoplasmic portion of the chain corresponds to 113-388 (DWNTPKKGGR…LPETEVLEVN (276 aa)).

Belongs to the diacylglycerol acyltransferase family. In terms of assembly, forms multimeric complexes consisting of several DGAT2 subunits. Interacts with SLC27A1 and this interaction is enhanced in the presence of ZFYVE1.

It is found in the endoplasmic reticulum membrane. It localises to the lipid droplet. The protein resides in the cytoplasm. The protein localises to the perinuclear region. The enzyme catalyses an acyl-CoA + a 1,2-diacyl-sn-glycerol = a triacyl-sn-glycerol + CoA. It catalyses the reaction all-trans-retinol + an acyl-CoA = an all-trans-retinyl ester + CoA. The catalysed reaction is 2-(9Z-octadecenoyl)-glycerol + (9Z)-octadecenoyl-CoA = 1,2-di-(9Z-octadecenoyl)-sn-glycerol + CoA. It carries out the reaction 1,2-di-(9Z-octadecenoyl)-sn-glycerol + (9Z)-octadecenoyl-CoA = 1,2,3-tri-(9Z-octadecenoyl)-glycerol + CoA. The enzyme catalyses all-trans-retinol + hexadecanoyl-CoA = all-trans-retinyl hexadecanoate + CoA. It catalyses the reaction 1-O-(9Z-octadecenyl)-glycerol + (9Z)-octadecenoyl-CoA = 1-O-(9Z-octadecyl)-3-(9Z-octadecenoyl)-glycerol + CoA. The catalysed reaction is 1-(9Z-octadecenoyl)-glycerol + (9Z)-octadecenoyl-CoA = 1,2-di-(9Z-octadecenoyl)-glycerol + CoA. It carries out the reaction 1,2-di-(9Z-octadecenoyl)-sn-glycerol + hexadecanoyl-CoA = 1,2-di-(9Z)-octadecenoyl-3-hexadecanoyl-sn-glycerol + CoA. The enzyme catalyses 1,3-di-(9Z-octadecenoyl)-glycerol + (9Z)-octadecenoyl-CoA = 1,2,3-tri-(9Z-octadecenoyl)-glycerol + CoA. It catalyses the reaction 2,3-di-(9Z)-octadecenoyl-sn-glycerol + (9Z)-octadecenoyl-CoA = 1,2,3-tri-(9Z-octadecenoyl)-glycerol + CoA. The catalysed reaction is 2-(9Z-octadecenoyl)-glycerol + hexadecanoyl-CoA = 1-hexadecanoyl-2-(9Z-octadecenoyl)-sn-glycerol + CoA. Its pathway is glycerolipid metabolism; triacylglycerol biosynthesis. Its activity is regulated as follows. Inhibited by niacin. Its function is as follows. Essential acyltransferase that catalyzes the terminal and only committed step in triacylglycerol synthesis by using diacylglycerol and fatty acyl CoA as substrates. Required for synthesis and storage of intracellular triglycerides. Probably plays a central role in cytosolic lipid accumulation. In liver, is primarily responsible for incorporating endogenously synthesized fatty acids into triglycerides. Also functions as an acyl-CoA retinol acyltransferase (ARAT). Also able to use 1-monoalkylglycerol (1-MAkG) as an acyl acceptor for the synthesis of monoalkyl-monoacylglycerol (MAMAG). This chain is Diacylglycerol O-acyltransferase 2, found in Rattus norvegicus (Rat).